The sequence spans 415 residues: Protein fuzzy homolog (415 aa).

Belongs to the fuzzy family. Component of the CPLANE (ciliogenesis and planar polarity effectors) complex, composed of INTU, FUZ and WDPCP. Interacts with CPLANE1. Interacts with CPLANE2. In terms of tissue distribution, expressed in dermal and epidermal cells.

It localises to the cytoplasm. It is found in the cytoskeleton. Its subcellular location is the cilium basal body. Its function is as follows. Probable planar cell polarity effector involved in cilium biogenesis. May regulate protein and membrane transport to the cilium. Proposed to function as core component of the CPLANE (ciliogenesis and planar polarity effectors) complex involved in the recruitment of peripheral IFT-A proteins to basal bodies. May regulate the morphogenesis of hair follicles which depends on functional primary cilia. Binds phosphatidylinositol 3-phosphate with highest affinity, followed by phosphatidylinositol 4-phosphate and phosphatidylinositol 5-phosphate. This Mus musculus (Mouse) protein is Protein fuzzy homolog (Fuz).